A 444-amino-acid chain; its full sequence is Cholecystokinin receptor type A (444 aa).

Topologically, residues 1–56 (MSHSPARQHLVESSRMDVVDSLLMNGSNITPPCELGLENETLFCLDQPQPSKEWQS) are extracellular. 2 N-linked (GlcNAc...) asparagine glycosylation sites follow: asparagine 25 and asparagine 39. Cysteine 33 and cysteine 44 form a disulfide bridge. The chain crosses the membrane as a helical span at residues 57–82 (ALQILLYSIIFLLSVLGNTLVITVLI). Residues 83–92 (RNKRMRTVTN) are Cytoplasmic-facing. Residues 93–119 (IFLLSLAVSDLMLCLFCMPFNLIPNLL) form a helical membrane-spanning segment. Over 120 to 130 (KDFIFGSAVCK) the chain is Extracellular. Cysteine 129 and cysteine 211 are joined by a disulfide. The chain crosses the membrane as a helical span at residues 131-152 (TTTYFMGTSVSVSTFNLVAISL). At 153 to 172 (ERYGAICRPLQSRVWQTKSH) the chain is on the cytoplasmic side. A helical transmembrane segment spans residues 173–193 (ALKVIAATWCLSFTIMTPYPI). Residues 194–225 (YSNLVPFTKNNNQTANMCRFLLPSDAMQQSWQ) are Extracellular-facing. A glycan (N-linked (GlcNAc...) asparagine) is linked at asparagine 205. The helical transmembrane segment at 226 to 249 (TFLLLILFLLPGIVMVVAYGLISL) threads the bilayer. Residues 250–329 (ELYQGIKFDA…NLIAKKRVIR (80 aa)) lie on the Cytoplasmic side of the membrane. The segment at 263-288 (KSAKEKKPSTGSSTRYEDSDGCYLQK) is disordered. The helical transmembrane segment at 330 to 350 (MLIVIVVLFFLCWMPIFSANA) threads the bilayer. Topologically, residues 351 to 365 (WRAYDTVSAEKHLSG) are extracellular. Residues 366 to 389 (TPISFILLLSYTSSCVNPIIYCFM) traverse the membrane as a helical segment. The Cytoplasmic portion of the chain corresponds to 390–444 (NKRFRLGFMATFPCCPNPGPPGVRGEVGEEEDGRTIRALLSRYSYSHMSTSAPPP). The S-palmitoyl cysteine moiety is linked to residue cysteine 403.

This sequence belongs to the G-protein coupled receptor 1 family. As to expression, pancreas and brain. Also expressed in the gastrointestinal system and vagus nerve.

Its subcellular location is the cell membrane. Receptor for cholecystokinin. Mediates pancreatic growth and enzyme secretion, smooth muscle contraction of the gall bladder and stomach. Has a 1000-fold higher affinity for CCK rather than for gastrin. It modulates feeding and dopamine-induced behavior in the central and peripheral nervous system. This receptor mediates its action by association with G proteins that activate a phosphatidylinositol-calcium second messenger system. The polypeptide is Cholecystokinin receptor type A (Cckar) (Rattus norvegicus (Rat)).